The sequence spans 98 residues: Flagellar hook-basal body complex protein FliE (98 aa).

The segment covering 1-23 (MNNINDLRLNNNISNTNKSQNST) has biased composition (low complexity). Positions 1-24 (MNNINDLRLNNNISNTNKSQNSTG) are disordered.

The protein belongs to the FliE family.

The protein localises to the bacterial flagellum basal body. In Campylobacter jejuni subsp. jejuni serotype O:2 (strain ATCC 700819 / NCTC 11168), this protein is Flagellar hook-basal body complex protein FliE.